Reading from the N-terminus, the 373-residue chain is Spermidine/putrescine import ATP-binding protein PotA (373 aa).

The region spanning 11 to 241 (IELRSLKKSY…PSNLFVAKFI (231 aa)) is the ABC transporter domain. 43–50 (GPSGCGKT) lines the ATP pocket.

This sequence belongs to the ABC transporter superfamily. Spermidine/putrescine importer (TC 3.A.1.11.1) family. As to quaternary structure, the complex is composed of two ATP-binding proteins (PotA), two transmembrane proteins (PotB and PotC) and a solute-binding protein (PotD).

It localises to the cell inner membrane. It catalyses the reaction ATP + H2O + polyamine-[polyamine-binding protein]Side 1 = ADP + phosphate + polyamineSide 2 + [polyamine-binding protein]Side 1.. Its function is as follows. Part of the ABC transporter complex PotABCD involved in spermidine/putrescine import. Responsible for energy coupling to the transport system. This Mannheimia succiniciproducens (strain KCTC 0769BP / MBEL55E) protein is Spermidine/putrescine import ATP-binding protein PotA.